A 216-amino-acid chain; its full sequence is Ras-related protein Rab11C (216 aa).

19–26 (GDSGVGKS) contributes to the GTP binding site. Positions 41 to 49 (SKSTIGVEF) match the Effector region motif. GTP contacts are provided by residues 67–71 (DTAGQ) and 125–128 (NKSD). S-geranylgeranyl cysteine attachment occurs at residues Cys213 and Cys214.

It belongs to the small GTPase superfamily. Rab family.

It localises to the cell membrane. The chain is Ras-related protein Rab11C (RAB11C) from Lotus japonicus (Lotus corniculatus var. japonicus).